Here is a 372-residue protein sequence, read N- to C-terminus: Queuine tRNA-ribosyltransferase (372 aa).

The active-site Proton acceptor is Asp92. Substrate contacts are provided by residues 92–96 (DSGGF), Asp146, Gln188, and Gly215. The segment at 246–252 (GIGTLRE) is RNA binding. The Nucleophile role is filled by Asp265. The segment at 270–274 (TRLGR) is RNA binding; important for wobble base 34 recognition. 4 residues coordinate Zn(2+): Cys303, Cys305, Cys308, and His334.

Belongs to the queuine tRNA-ribosyltransferase family. Homodimer. Within each dimer, one monomer is responsible for RNA recognition and catalysis, while the other monomer binds to the replacement base PreQ1. Requires Zn(2+) as cofactor.

The catalysed reaction is 7-aminomethyl-7-carbaguanine + guanosine(34) in tRNA = 7-aminomethyl-7-carbaguanosine(34) in tRNA + guanine. The protein operates within tRNA modification; tRNA-queuosine biosynthesis. Its function is as follows. Catalyzes the base-exchange of a guanine (G) residue with the queuine precursor 7-aminomethyl-7-deazaguanine (PreQ1) at position 34 (anticodon wobble position) in tRNAs with GU(N) anticodons (tRNA-Asp, -Asn, -His and -Tyr). Catalysis occurs through a double-displacement mechanism. The nucleophile active site attacks the C1' of nucleotide 34 to detach the guanine base from the RNA, forming a covalent enzyme-RNA intermediate. The proton acceptor active site deprotonates the incoming PreQ1, allowing a nucleophilic attack on the C1' of the ribose to form the product. After dissociation, two additional enzymatic reactions on the tRNA convert PreQ1 to queuine (Q), resulting in the hypermodified nucleoside queuosine (7-(((4,5-cis-dihydroxy-2-cyclopenten-1-yl)amino)methyl)-7-deazaguanosine). The polypeptide is Queuine tRNA-ribosyltransferase (Synechococcus sp. (strain CC9902)).